The primary structure comprises 381 residues: Protein-glutamate methylesterase/protein-glutamine glutaminase (381 aa).

In terms of domain architecture, Response regulatory spans 8-125 (QVLCIDDSAL…RDGMNEYADQ (118 aa)). Aspartate 59 bears the 4-aspartylphosphate mark. Residues 183–375 (FSSTEKLIIV…PHVLARLSAH (193 aa)) form the CheB-type methylesterase domain. Residues serine 195, histidine 221, and aspartate 317 contribute to the active site.

This sequence belongs to the CheB family. Phosphorylated by CheA. Phosphorylation of the N-terminal regulatory domain activates the methylesterase activity.

It localises to the cytoplasm. It carries out the reaction [protein]-L-glutamate 5-O-methyl ester + H2O = L-glutamyl-[protein] + methanol + H(+). The enzyme catalyses L-glutaminyl-[protein] + H2O = L-glutamyl-[protein] + NH4(+). Involved in chemotaxis. Part of a chemotaxis signal transduction system that modulates chemotaxis in response to various stimuli. Catalyzes the demethylation of specific methylglutamate residues introduced into the chemoreceptors (methyl-accepting chemotaxis proteins or MCP) by CheR. Also mediates the irreversible deamidation of specific glutamine residues to glutamic acid. This chain is Protein-glutamate methylesterase/protein-glutamine glutaminase, found in Ralstonia nicotianae (strain ATCC BAA-1114 / GMI1000) (Ralstonia solanacearum).